Consider the following 81-residue polypeptide: Photosystem I iron-sulfur center (81 aa).

4Fe-4S ferredoxin-type domains lie at 2 to 31 (SHTVKIYDTCIGCTQCVRACPTDVLEMVPW) and 39 to 68 (IASSPRTEDCVGCKRCETACPTDFLSIRVY). The [4Fe-4S] cluster site is built by cysteine 11, cysteine 14, cysteine 17, cysteine 21, cysteine 48, cysteine 51, cysteine 54, and cysteine 58.

In terms of assembly, the cyanobacterial PSI reaction center is composed of one copy each of PsaA,B,C,D,E,F,I,J,K,L,M and X, and forms trimeric complexes. The cofactor is [4Fe-4S] cluster.

It is found in the cellular thylakoid membrane. The enzyme catalyses reduced [plastocyanin] + hnu + oxidized [2Fe-2S]-[ferredoxin] = oxidized [plastocyanin] + reduced [2Fe-2S]-[ferredoxin]. Functionally, apoprotein for the two 4Fe-4S centers FA and FB of photosystem I (PSI); essential for photochemical activity. FB is the terminal electron acceptor of PSI, donating electrons to ferredoxin. The C-terminus interacts with PsaA/B/D and helps assemble the protein into the PSI complex. Required for binding of PsaD and PsaE to PSI. PSI is a plastocyanin/cytochrome c6-ferredoxin oxidoreductase, converting photonic excitation into a charge separation, which transfers an electron from the donor P700 chlorophyll pair to the spectroscopically characterized acceptors A0, A1, FX, FA and FB in turn. This chain is Photosystem I iron-sulfur center, found in Microchaete diplosiphon (Fremyella diplosiphon).